Consider the following 352-residue polypeptide: Quinolinate synthase (352 aa).

Iminosuccinate-binding residues include His48 and Ser69. [4Fe-4S] cluster is bound at residue Cys114. Iminosuccinate-binding positions include 140–142 (YAN) and Ser157. Cys201 serves as a coordination point for [4Fe-4S] cluster. Residues 227-229 (HPE) and Thr244 each bind iminosuccinate. Cys298 serves as a coordination point for [4Fe-4S] cluster.

This sequence belongs to the quinolinate synthase family. Type 1 subfamily. [4Fe-4S] cluster serves as cofactor.

It is found in the cytoplasm. The catalysed reaction is iminosuccinate + dihydroxyacetone phosphate = quinolinate + phosphate + 2 H2O + H(+). It participates in cofactor biosynthesis; NAD(+) biosynthesis; quinolinate from iminoaspartate: step 1/1. In terms of biological role, catalyzes the condensation of iminoaspartate with dihydroxyacetone phosphate to form quinolinate. This Ectopseudomonas mendocina (strain ymp) (Pseudomonas mendocina) protein is Quinolinate synthase.